The primary structure comprises 303 residues: Leukocyte immunoglobulin-like receptor subfamily B member 4B (303 aa).

Residues 1 to 23 (MIAMLTVLLYLALILEPRTAVQA) form the signal peptide. Residues 24 to 238 (GHLPKPIIWA…TEDGLETYQK (215 aa)) lie on the Extracellular side of the membrane. Ig-like C2-type domains lie at 42-123 (YTSV…AYEN) and 124-212 (PSLS…KPSN). C49 and C98 are joined by a disulfide. N-linked (GlcNAc...) asparagine glycans are attached at residues N79, N133, and N191. The cysteines at positions 144 and 196 are disulfide-linked. Residues 239–260 (ILIGVLVSFLLLFFLLLFLILI) traverse the membrane as a helical segment. Over 261–303 (GYQCRHKNKANASVKNTQSEDNAELNSWNPQNEDPPRELCTPR) the chain is Cytoplasmic. The segment covering 275 to 292 (KNTQSEDNAELNSWNPQN) has biased composition (polar residues). Positions 275–303 (KNTQSEDNAELNSWNPQNEDPPRELCTPR) are disordered.

As to quaternary structure, monomer and homodimer. Expressed on mast cells (at protein level). Also expressed at much lower levels on natural killer cells (at protein level).

Its subcellular location is the cell membrane. Its function is as follows. Plays a role in mast cell activation. The polypeptide is Leukocyte immunoglobulin-like receptor subfamily B member 4B (Mus musculus (Mouse)).